The sequence spans 623 residues: MKLSSFGLFLALQLLPALGLPSRIDEVDVSDPELIGLLKPDNVDKPANSIPLSKRSTSPSYAPYTVACPSGSLLRPASDGLSTGEQEFVDKRVSKVNSALESFISKTGLKIDTKSVLNDTDGPRLGIAISGGGFPAMLTGAGAINAFDARNGNTTSLGGILQSSMYLTGLSGGSWLVGSVAVNNFANITFLHDDVWNLDHSLFAPYDDAFENFYIYQEWFEQVLQKKNAGFNVSITDLWGRALALKLVNPLTGGANTTFSSVTNETWFQDGEFPFPIIIADNVIEGETVIPLNDTVFEFTPIEFGTWDTGVESFIPMEYTGTHLINGIPLNESCVRNFDNAGFLMGTSSNVFSGILPATNASLTASNNTFNNAVLSFLEMLAEDQLDVGLYPNPYQGYGNASNTTTTNPLEPYPIIELIDGGSDSEGIPFWPLLHPQRDVDVIFAIDGGYQSATSGWPDGSSLVSTYERVLATNSSGVRGFPYIPDTNTFLALGLNTHPTFFGCDGRNTTAGNHTVNDDTPPLVVYFPNYPWTMYANVTTYTVQLEDTLSSGMIENAAVAATQNNSDSFAVCVACALVQRSLERKNMSTPSQCASCFNQYCWNGTIASTTVTTYAPTVLSAKI.

Residues 1 to 19 (MKLSSFGLFLALQLLPALG) form the signal peptide. Residues 67-607 (ACPSGSLLRP…NQYCWNGTIA (541 aa)) enclose the PLA2c domain. N-linked (GlcNAc...) asparagine glycosylation is found at N118, N153, N187, N232, N256, N264, N293, N331, N360, N367, N400, N403, N474, N508, N513, N537, N564, N586, and N603.

It belongs to the lysophospholipase family.

The protein localises to the secreted. The enzyme catalyses a 1-acyl-sn-glycero-3-phosphocholine + H2O = sn-glycerol 3-phosphocholine + a fatty acid + H(+). In terms of biological role, catalyzes the release of fatty acids from lysophospholipids. This is Probable lysophospholipase 5 (plb5) from Schizosaccharomyces pombe (strain 972 / ATCC 24843) (Fission yeast).